The chain runs to 152 residues: Complexin (152 aa).

The tract at residues 1–119 (MAAFIAKQMV…EEEDDDEFAK (119 aa)) is disordered. Acidic residues predominate over residues 23–39 (DEGEKEGNENAEEEAAA). Composition is skewed to basic and acidic residues over residues 41 to 82 (EEAR…VKEE) and 90 to 104 (DEGR…KEEL). Residues 59 to 75 (EEEREEMRQTIRDKYGL) are interaction with the SNARE complex. At Cys-149 the chain carries Cysteine methyl ester. Cys-149 carries the S-farnesyl cysteine lipid modification. Residues 150-152 (SLQ) constitute a propeptide, removed in mature form.

This sequence belongs to the complexin/synaphin family. In terms of assembly, binds to the SNARE core complex containing SNAP25, synaptobrevin and syntaxin-1.

The protein localises to the membrane. The protein resides in the cytoplasm. It localises to the cytosol. Its function is as follows. Positively regulates a late step in synaptic vesicle exocytosis. The polypeptide is Complexin (cpx) (Doryteuthis pealeii (Longfin inshore squid)).